A 241-amino-acid polypeptide reads, in one-letter code: Geranylgeranylglyceryl phosphate synthase (241 aa).

2 residues coordinate Mg(2+): Asp19 and Ser46. Residues 167–173, 198–199, and 220–221 each bind sn-glycerol 1-phosphate; these read YLEAGSG, GG, and GT.

Belongs to the GGGP/HepGP synthase family. Group II subfamily. Mg(2+) is required as a cofactor.

It localises to the cytoplasm. The enzyme catalyses sn-glycerol 1-phosphate + (2E,6E,10E)-geranylgeranyl diphosphate = sn-3-O-(geranylgeranyl)glycerol 1-phosphate + diphosphate. It functions in the pathway membrane lipid metabolism; glycerophospholipid metabolism. Its function is as follows. Prenyltransferase that catalyzes the transfer of the geranylgeranyl moiety of geranylgeranyl diphosphate (GGPP) to the C3 hydroxyl of sn-glycerol-1-phosphate (G1P). This reaction is the first ether-bond-formation step in the biosynthesis of archaeal membrane lipids. In Pyrobaculum calidifontis (strain DSM 21063 / JCM 11548 / VA1), this protein is Geranylgeranylglyceryl phosphate synthase.